A 425-amino-acid polypeptide reads, in one-letter code: Monoacylglycerol lipase ABHD2 (425 aa).

At 1-9 (MNAMMETSE) the chain is on the cytoplasmic side. A helical; Signal-anchor for type II membrane protein membrane pass occupies residues 10 to 30 (LPAVFDGVKLAAVAAVLYVIV). At 31-425 (RCLNLKSPTA…DTELVEADLE (395 aa)) the chain is on the extracellular side. Positions 128–382 (MVICPGIANH…HGGHLGFFEG (255 aa)) constitute an AB hydrolase-1 domain. An N-linked (GlcNAc...) asparagine glycan is attached at Asn-136. The active-site Nucleophile is the Ser-207. Residues Asp-345 and His-376 each act as charge relay system in the active site. A glycan (N-linked (GlcNAc...) asparagine) is linked at Asn-410.

The protein belongs to the AB hydrolase superfamily. AB hydrolase 4 family.

The protein localises to the cell membrane. It catalyses the reaction Hydrolyzes glycerol monoesters of long-chain fatty acids.. It carries out the reaction an acetyl ester + H2O = an aliphatic alcohol + acetate + H(+). The catalysed reaction is a triacylglycerol + H2O = a diacylglycerol + a fatty acid + H(+). The enzyme catalyses 2-(5Z,8Z,11Z,14Z-eicosatetraenoyl)-glycerol + H2O = glycerol + (5Z,8Z,11Z,14Z)-eicosatetraenoate + H(+). It catalyses the reaction a butanoate ester + H2O = an aliphatic alcohol + butanoate + H(+). It carries out the reaction hexadecanoate ester + H2O = an aliphatic alcohol + hexadecanoate + H(+). Its activity is regulated as follows. Acylglycerol lipase activity is activated upon binding to progesterone. Its function is as follows. Progesterone-dependent acylglycerol lipase that catalyzes hydrolysis of endocannabinoid arachidonoylglycerol (AG) from cell membrane. Acts as a progesterone receptor: progesterone-binding activates the acylglycerol lipase activity, mediating degradation of 1-arachidonoylglycerol (1AG) and 2-arachidonoylglycerol (2AG) to glycerol and arachidonic acid (AA). Also displays an ester hydrolase activity against acetyl ester, butanoate ester and hexadecanoate ester. Plays a key role in sperm capacitation in response to progesterone by mediating degradation of 2AG, an inhibitor of the sperm calcium channel CatSper, leading to calcium influx via CatSper and sperm activation. May also play a role in smooth muscle cells migration. The sequence is that of Monoacylglycerol lipase ABHD2 (ABHD2) from Bos taurus (Bovine).